A 285-amino-acid chain; its full sequence is Bifunctional protein FolD (285 aa).

NADP(+)-binding positions include 165–167, S190, and I231; that span reads GRS.

The protein belongs to the tetrahydrofolate dehydrogenase/cyclohydrolase family. As to quaternary structure, homodimer.

It carries out the reaction (6R)-5,10-methylene-5,6,7,8-tetrahydrofolate + NADP(+) = (6R)-5,10-methenyltetrahydrofolate + NADPH. The enzyme catalyses (6R)-5,10-methenyltetrahydrofolate + H2O = (6R)-10-formyltetrahydrofolate + H(+). It functions in the pathway one-carbon metabolism; tetrahydrofolate interconversion. Catalyzes the oxidation of 5,10-methylenetetrahydrofolate to 5,10-methenyltetrahydrofolate and then the hydrolysis of 5,10-methenyltetrahydrofolate to 10-formyltetrahydrofolate. The polypeptide is Bifunctional protein FolD (Verminephrobacter eiseniae (strain EF01-2)).